Consider the following 313-residue polypeptide: Protein-methionine-sulfoxide reductase catalytic subunit MsrP (313 aa).

A signal peptide (tat-type signal) is located at residues 1–44 (MARWRPDMAEREATPEALYLRRREFLALGAAGAVGLLVARGARA). Residues Asn76, 79 to 80 (YE), Cys134, Thr169, Asn217, Arg222, and 233 to 235 (GAK) contribute to the Mo-molybdopterin site.

It belongs to the MsrP family. In terms of assembly, heterodimer of a catalytic subunit (MsrP) and a heme-binding subunit (MsrQ). The cofactor is Mo-molybdopterin. Predicted to be exported by the Tat system. The position of the signal peptide cleavage has not been experimentally proven.

The protein resides in the periplasm. It catalyses the reaction L-methionyl-[protein] + a quinone + H2O = L-methionyl-(S)-S-oxide-[protein] + a quinol. The catalysed reaction is L-methionyl-[protein] + a quinone + H2O = L-methionyl-(R)-S-oxide-[protein] + a quinol. Its function is as follows. Part of the MsrPQ system that repairs oxidized periplasmic proteins containing methionine sulfoxide residues (Met-O), using respiratory chain electrons. Thus protects these proteins from oxidative-stress damage caused by reactive species of oxygen and chlorine generated by the host defense mechanisms. MsrPQ is essential for the maintenance of envelope integrity under bleach stress, rescuing a wide series of structurally unrelated periplasmic proteins from methionine oxidation. The catalytic subunit MsrP is non-stereospecific, being able to reduce both (R-) and (S-) diastereoisomers of methionine sulfoxide. This Anaeromyxobacter sp. (strain K) protein is Protein-methionine-sulfoxide reductase catalytic subunit MsrP.